A 343-amino-acid polypeptide reads, in one-letter code: Phosphoribosylformylglycinamidine cyclo-ligase (343 aa).

This sequence belongs to the AIR synthase family.

It is found in the cytoplasm. It carries out the reaction 2-formamido-N(1)-(5-O-phospho-beta-D-ribosyl)acetamidine + ATP = 5-amino-1-(5-phospho-beta-D-ribosyl)imidazole + ADP + phosphate + H(+). Its pathway is purine metabolism; IMP biosynthesis via de novo pathway; 5-amino-1-(5-phospho-D-ribosyl)imidazole from N(2)-formyl-N(1)-(5-phospho-D-ribosyl)glycinamide: step 2/2. This Parasynechococcus marenigrum (strain WH8102) protein is Phosphoribosylformylglycinamidine cyclo-ligase.